Here is a 222-residue protein sequence, read N- to C-terminus: Adenylate kinase (222 aa).

An ATP-binding site is contributed by 10 to 15 (GAGKGT). Residues 30–59 (STGDMLRAAVKAGTPLGIEAKKVMDAGGLV) are NMP. AMP-binding positions include threonine 31, arginine 36, 57 to 59 (GLV), 85 to 88 (GFPR), and glutamine 92. The segment at 122 to 159 (GRRVHVASGRTYHVKYNPPKTEGVDDESGEPLIQRDDD) is LID. Residues arginine 123 and 132-133 (TY) each bind ATP. Residues 138 to 160 (NPPKTEGVDDESGEPLIQRDDDK) are disordered. AMP contacts are provided by arginine 156 and arginine 167. Glycine 207 contacts ATP.

It belongs to the adenylate kinase family. Monomer.

It is found in the cytoplasm. The catalysed reaction is AMP + ATP = 2 ADP. It functions in the pathway purine metabolism; AMP biosynthesis via salvage pathway; AMP from ADP: step 1/1. Functionally, catalyzes the reversible transfer of the terminal phosphate group between ATP and AMP. Plays an important role in cellular energy homeostasis and in adenine nucleotide metabolism. This Ralstonia pickettii (strain 12J) protein is Adenylate kinase.